The sequence spans 229 residues: Enolase-phosphatase E1 (229 aa).

It belongs to the HAD-like hydrolase superfamily. MasA/MtnC family. In terms of assembly, monomer. Mg(2+) is required as a cofactor.

It carries out the reaction 5-methylsulfanyl-2,3-dioxopentyl phosphate + H2O = 1,2-dihydroxy-5-(methylsulfanyl)pent-1-en-3-one + phosphate. The protein operates within amino-acid biosynthesis; L-methionine biosynthesis via salvage pathway; L-methionine from S-methyl-5-thio-alpha-D-ribose 1-phosphate: step 3/6. It participates in amino-acid biosynthesis; L-methionine biosynthesis via salvage pathway; L-methionine from S-methyl-5-thio-alpha-D-ribose 1-phosphate: step 4/6. In terms of biological role, bifunctional enzyme that catalyzes the enolization of 2,3-diketo-5-methylthiopentyl-1-phosphate (DK-MTP-1-P) into the intermediate 2-hydroxy-3-keto-5-methylthiopentenyl-1-phosphate (HK-MTPenyl-1-P), which is then dephosphorylated to form the acireductone 1,2-dihydroxy-3-keto-5-methylthiopentene (DHK-MTPene). This Erwinia tasmaniensis (strain DSM 17950 / CFBP 7177 / CIP 109463 / NCPPB 4357 / Et1/99) protein is Enolase-phosphatase E1.